The primary structure comprises 436 residues: MAVTVETLEKLERKMTLTLPLNTIQSEVDTRLKRLARTVKMDGFRPGKVPMNVVAQRYGYSVHYEVMNDKVGEAFAVAANEAKLRVAGQPRISEKEGAPEGELVFDAVFEVYPDVKIADLTQAEVEKVSAEVSDAAIDKTVDILRKQRRTFAQRAADAPAQDGDRATIDFEGKIDGETFAGGKAEDFQFLVGEGQMLKEFEDAVRGMKSGESKTFPLNFPADYHGKDVAGKQADFLVTVKKIEAAHLPEVNEALAKSLGIADGTVEALRADIKKNLEREVKFRLLARNKNAVMDALVANAELELPKSSVQAEVDRMIEGARADLKQRGIKDADKAPIPDDVFRPQAEKRVRLGLVVAELVRANGLQAKPEQLKAHIEELAASYEKPQDVVRWYLGDNRRMAEVEAVVIENNVTEFVLGKAKVNDKAISFDDLMGQN.

Positions 163 to 248 (GDRATIDFEG…VKKIEAAHLP (86 aa)) constitute a PPIase FKBP-type domain.

The protein belongs to the FKBP-type PPIase family. Tig subfamily.

Its subcellular location is the cytoplasm. It catalyses the reaction [protein]-peptidylproline (omega=180) = [protein]-peptidylproline (omega=0). In terms of biological role, involved in protein export. Acts as a chaperone by maintaining the newly synthesized protein in an open conformation. Functions as a peptidyl-prolyl cis-trans isomerase. The chain is Trigger factor from Polaromonas sp. (strain JS666 / ATCC BAA-500).